Here is a 376-residue protein sequence, read N- to C-terminus: Chaperone protein DnaJ (376 aa).

The region spanning 5–70 (DYYEVLGVAR…NKRRAYDAHG (66 aa)) is the J domain. The CR-type zinc-finger motif lies at 132–209 (GIERRIEIPT…CHGAGRVEEN (78 aa)). The Zn(2+) site is built by Cys-145, Cys-148, Cys-161, Cys-164, Cys-183, Cys-186, Cys-197, and Cys-200. CXXCXGXG motif repeat units lie at residues 145–152 (CVSCHGSG), 161–168 (CGTCHGRG), 183–190 (CPHCDGRG), and 197–204 (CKTCHGAG).

The protein belongs to the DnaJ family. As to quaternary structure, homodimer. Requires Zn(2+) as cofactor.

Its subcellular location is the cytoplasm. Its function is as follows. Participates actively in the response to hyperosmotic and heat shock by preventing the aggregation of stress-denatured proteins and by disaggregating proteins, also in an autonomous, DnaK-independent fashion. Unfolded proteins bind initially to DnaJ; upon interaction with the DnaJ-bound protein, DnaK hydrolyzes its bound ATP, resulting in the formation of a stable complex. GrpE releases ADP from DnaK; ATP binding to DnaK triggers the release of the substrate protein, thus completing the reaction cycle. Several rounds of ATP-dependent interactions between DnaJ, DnaK and GrpE are required for fully efficient folding. Also involved, together with DnaK and GrpE, in the DNA replication of plasmids through activation of initiation proteins. This chain is Chaperone protein DnaJ, found in Xanthomonas oryzae pv. oryzae (strain PXO99A).